Consider the following 674-residue polypeptide: ATP-citrate synthase subunit 1 (674 aa).

Low complexity predominate over residues 1 to 10 (MPSATSTNGA). The interval 1–26 (MPSATSTNGANGNGNGNGASASPAPG) is disordered. Residues 261–281 (LLRY…EVGG) and 312–338 (FKTE…KNKS) each bind ATP. Glu278 contributes to the Mg(2+) binding site. His320 (tele-phosphohistidine intermediate) is an active-site residue. 339-349 (MREAGFYVPDT) contributes to the CoA binding site.

This sequence belongs to the succinate/malate CoA ligase alpha subunit family. Composed of two subunits.

The protein resides in the cytoplasm. It catalyses the reaction oxaloacetate + acetyl-CoA + ADP + phosphate = citrate + ATP + CoA. Catalyzes the formation of cytosolic acetyl-CoA, which is mainly used for the biosynthesis of fatty acids and sterols. The protein is ATP-citrate synthase subunit 1 (ACL1) of Sordaria macrospora (strain ATCC MYA-333 / DSM 997 / K(L3346) / K-hell).